A 337-amino-acid chain; its full sequence is Glyceraldehyde-3-phosphate dehydrogenase, cytosolic (337 aa).

Positions 1–151 (MAKVKVGING…YKSDLNIVSN (151 aa)) are binding to NAD. NAD(+) is bound by residues 13 to 14 (RI), D35, and R82. The interval 152 to 337 (ASCTTNCLAP…DLIMHISKCQ (186 aa)) is catalytic. D-glyceraldehyde 3-phosphate contacts are provided by residues 153 to 155 (SCT), T184, 213 to 214 (TG), and R236. C154 (nucleophile) is an active-site residue. N318 serves as a coordination point for NAD(+).

Belongs to the glyceraldehyde-3-phosphate dehydrogenase family. As to quaternary structure, homotetramer.

Its subcellular location is the cytoplasm. It carries out the reaction D-glyceraldehyde 3-phosphate + phosphate + NAD(+) = (2R)-3-phospho-glyceroyl phosphate + NADH + H(+). The protein operates within carbohydrate degradation; glycolysis; pyruvate from D-glyceraldehyde 3-phosphate: step 1/5. In terms of biological role, key enzyme in glycolysis that catalyzes the first step of the pathway by converting D-glyceraldehyde 3-phosphate (G3P) into 3-phospho-D-glyceroyl phosphate. Essential for the maintenance of cellular ATP levels and carbohydrate metabolism. The chain is Glyceraldehyde-3-phosphate dehydrogenase, cytosolic (GAPC) from Mesembryanthemum crystallinum (Common ice plant).